The chain runs to 402 residues: Acetyl-CoA acetyltransferase (402 aa).

Cys-90 serves as the catalytic Acyl-thioester intermediate. CoA contacts are provided by Tyr-185 and Lys-230. Tyr-185 serves as a coordination point for K(+). Ala-250 contributes to the K(+) binding site. Ser-251 is a CoA binding site. Val-348 provides a ligand contact to K(+). Active-site proton acceptor residues include His-352 and Cys-382.

It belongs to the thiolase-like superfamily. Thiolase family. Homotetramer.

Its subcellular location is the cytoplasm. The protein resides in the cytosol. The enzyme catalyses 2 acetyl-CoA = acetoacetyl-CoA + CoA. It functions in the pathway metabolic intermediate biosynthesis; (R)-mevalonate biosynthesis; (R)-mevalonate from acetyl-CoA: step 1/3. Acetyl-CoA acetyltransferase; part of the first module of ergosterol biosynthesis pathway that includes the early steps of the pathway, conserved across all eukaryotes, and which results in the formation of mevalonate from acetyl-coenzyme A (acetyl-CoA). ERG10 catalyzes the formation of acetoacetyl-CoA from acetyl-CoA. The first module starts with the action of the cytosolic acetyl-CoA acetyltransferase ERG10 that catalyzes the formation of acetoacetyl-CoA. The hydroxymethylglutaryl-CoA synthase ERG13 then condenses acetyl-CoA with acetoacetyl-CoA to form HMG-CoA. The 3-hydroxy-3-methylglutaryl-coenzyme A (HMG-CoA) reductase HMG1 finally reduces HMG-CoA to produce mevalonate. This is Acetyl-CoA acetyltransferase from Candida albicans (strain SC5314 / ATCC MYA-2876) (Yeast).